The chain runs to 32 residues: Trypsin inhibitor 2b (32 aa).

3 cysteine pairs are disulfide-bonded: Cys-3/Cys-20, Cys-10/Cys-22, and Cys-16/Cys-29.

This sequence belongs to the protease inhibitor I7 (squash-type serine protease inhibitor) family.

The protein resides in the secreted. In terms of biological role, inhibits trypsin. In Cucumis sativus (Cucumber), this protein is Trypsin inhibitor 2b.